A 747-amino-acid chain; its full sequence is Catalase-peroxidase 1 (747 aa).

Residues 1–22 (MTDTSDARPPHSDDKTRSHSES) are compositionally biased toward basic and acidic residues. The interval 1-39 (MTDTSDARPPHSDDKTRSHSESENPAIDSPEPKVHAPLT) is disordered. Residues 112 to 240 (WHAAGTYRIF…FGATTMGLIY (129 aa)) constitute a cross-link (tryptophyl-tyrosyl-methioninium (Trp-Tyr) (with M-266)). His-113 acts as the Proton acceptor in catalysis. Positions 240–266 (YVNPEGPEGKPDPLAAAHDIRETFGRM) form a cross-link, tryptophyl-tyrosyl-methioninium (Tyr-Met) (with W-112). His-281 serves as a coordination point for heme b.

The protein belongs to the peroxidase family. Peroxidase/catalase subfamily. As to quaternary structure, homodimer or homotetramer. The cofactor is heme b. Post-translationally, formation of the three residue Trp-Tyr-Met cross-link is important for the catalase, but not the peroxidase activity of the enzyme.

It carries out the reaction H2O2 + AH2 = A + 2 H2O. It catalyses the reaction 2 H2O2 = O2 + 2 H2O. In terms of biological role, bifunctional enzyme with both catalase and broad-spectrum peroxidase activity. This Mycolicibacterium vanbaalenii (strain DSM 7251 / JCM 13017 / BCRC 16820 / KCTC 9966 / NRRL B-24157 / PYR-1) (Mycobacterium vanbaalenii) protein is Catalase-peroxidase 1.